The chain runs to 336 residues: Probable deoxyhypusine synthase (336 aa).

K308 serves as the catalytic Nucleophile.

This sequence belongs to the deoxyhypusine synthase family. It depends on NAD(+) as a cofactor.

It carries out the reaction [eIF5A protein]-L-lysine + spermidine = [eIF5A protein]-deoxyhypusine + propane-1,3-diamine. The protein operates within protein modification; eIF5A hypusination. In terms of biological role, catalyzes the NAD-dependent oxidative cleavage of spermidine and the subsequent transfer of the butylamine moiety of spermidine to the epsilon-amino group of a specific lysine residue of the eIF-5A precursor protein to form the intermediate deoxyhypusine residue. The polypeptide is Probable deoxyhypusine synthase (Pyrococcus furiosus (strain ATCC 43587 / DSM 3638 / JCM 8422 / Vc1)).